A 326-amino-acid chain; its full sequence is Protein-ribulosamine 3-kinase, chloroplastic (326 aa).

Residues 1-30 (MAVASLSICFSARPHLLLRNFSPRPKFVAM) constitute a chloroplast transit peptide. 125 to 127 (EFI) lines the ATP pocket. Residue Asp-230 is the Proton acceptor of the active site.

The protein belongs to the fructosamine kinase family.

Its subcellular location is the plastid. The protein resides in the chloroplast. The enzyme catalyses N(6)-D-ribulosyl-L-lysyl-[protein] + ATP = N(6)-(3-O-phospho-D-ribulosyl)-L-lysyl-[protein] + ADP + H(+). It catalyses the reaction N(6)-(D-erythrulosyl)-L-lysyl-[protein] + ATP = N(6)-(3-O-phospho-D-erythrulosyl)-L-lysyl-[protein] + ADP + H(+). Initiates a process leading to the deglycation of proteins. Phosphorylates low-molecular-mass and protein-bound erythrulosamines and ribulosamines, but not fructosamines or psicosamines, on the third carbon of the sugar moiety. Protein-bound erythrulosamine 3-phosphates and ribulosamine 3-phosphates are unstable and decompose under physiological conditions. The protein is Protein-ribulosamine 3-kinase, chloroplastic of Arabidopsis thaliana (Mouse-ear cress).